An 85-amino-acid chain; its full sequence is MSSGGLLLLLGLLTLWAELTPVSSRKRHPDCDKPPDTKICQTVVRAFYYKPSAKRCVQFRYGGCNGNGNHFKSDHLCRCECLEYP.

The N-terminal stretch at 1 to 24 is a signal peptide; the sequence is MSSGGLLLLLGLLTLWAELTPVSS. The BPTI/Kunitz inhibitor domain occupies 31 to 81; it reads CDKPPDTKICQTVVRAFYYKPSAKRCVQFRYGGCNGNGNHFKSDHLCRCEC. Intrachain disulfides connect C31–C81, C40–C64, and C56–C77.

It belongs to the venom Kunitz-type family. As to quaternary structure, heterodimer; disulfide-linked. The A chain has phospholipase A2 activity and the B chain shows homology with the basic protease inhibitors. Expressed by the venom gland.

Its subcellular location is the secreted. Functionally, beta-bungarotoxin is a presynaptic neurotoxin of the venom. The B chain is homologous to venom basic protease inhibitors but has no protease inhibitor activity and is non-toxic. The sequence is that of Kunitz-type serine protease inhibitor homolog beta-bungarotoxin B2a chain from Bungarus candidus (Malayan krait).